The primary structure comprises 644 residues: Exoribonuclease 2 (644 aa).

In terms of domain architecture, RNB spans 189–516 (REDLTALDFV…NHRLLKAIIK (328 aa)). Positions 561–643 (DSRFAAEIID…ETRSVIARPV (83 aa)) constitute an S1 motif domain.

Belongs to the RNR ribonuclease family. RNase II subfamily.

It is found in the cytoplasm. The enzyme catalyses Exonucleolytic cleavage in the 3'- to 5'-direction to yield nucleoside 5'-phosphates.. Involved in mRNA degradation. Hydrolyzes single-stranded polyribonucleotides processively in the 3' to 5' direction. In Cronobacter sakazakii (strain ATCC BAA-894) (Enterobacter sakazakii), this protein is Exoribonuclease 2.